An 83-amino-acid polypeptide reads, in one-letter code: Mu-theraphotoxin-Hhn2b 2 (83 aa).

Residues 1 to 21 (MKASMFLALAGLVLLFVVCYA) form the signal peptide. Residues 22 to 48 (SESEEKEFPRELISKIFTVDDFKGEER) constitute a propeptide that is removed on maturation. Intrachain disulfides connect Cys50–Cys65, Cys57–Cys70, and Cys64–Cys77. Residue Leu81 is modified to Leucine amide.

It belongs to the neurotoxin 10 (Hwtx-1) family. 14 (Hntx-1) subfamily. As to quaternary structure, monomer. Expressed by the venom gland.

The protein resides in the secreted. Functionally, weakly blocks the rat SCN2A/SCN1B (Nav1.2/beta-1) sodium channel (IC(50)=68 uM) and the insect sodium channel para/tipE (IC(50)=4.3 uM), without altering the activation or inactivation kinetics (depressant toxin). The chain is Mu-theraphotoxin-Hhn2b 2 from Cyriopagopus hainanus (Chinese bird spider).